The chain runs to 482 residues: ATP synthase subunit beta, chloroplastic (482 aa).

162-169 (GGAGVGKT) serves as a coordination point for ATP.

This sequence belongs to the ATPase alpha/beta chains family. F-type ATPases have 2 components, CF(1) - the catalytic core - and CF(0) - the membrane proton channel. CF(1) has five subunits: alpha(3), beta(3), gamma(1), delta(1), epsilon(1). CF(0) has four main subunits: a(1), b(1), b'(1) and c(9-12).

The protein resides in the plastid. It localises to the chloroplast thylakoid membrane. It carries out the reaction ATP + H2O + 4 H(+)(in) = ADP + phosphate + 5 H(+)(out). Its function is as follows. Produces ATP from ADP in the presence of a proton gradient across the membrane. The catalytic sites are hosted primarily by the beta subunits. This Pleurastrum terricola (Filamentous green alga) protein is ATP synthase subunit beta, chloroplastic.